The sequence spans 202 residues: Small ribosomal subunit protein uS4c (202 aa).

Residues 90 to 153 (MRLDNVIFRL…KSEAIISKNI (64 aa)) form the S4 RNA-binding domain.

The protein belongs to the universal ribosomal protein uS4 family. As to quaternary structure, part of the 30S ribosomal subunit. Contacts protein S5. The interaction surface between S4 and S5 is involved in control of translational fidelity.

It localises to the plastid. It is found in the chloroplast. One of the primary rRNA binding proteins, it binds directly to 16S rRNA where it nucleates assembly of the body of the 30S subunit. Its function is as follows. With S5 and S12 plays an important role in translational accuracy. The polypeptide is Small ribosomal subunit protein uS4c (rps4) (Cyathophorum bulbosum (Moss)).